Consider the following 253-residue polypeptide: Phosphoglycerate mutase 2 (253 aa).

T3 is subject to Phosphothreonine. Substrate contacts are provided by residues 10–17 (RHGESLWN), 23–24 (CG), R62, 89–92 (ERHY), K100, and 116–117 (RR). H11 serves as the catalytic Tele-phosphohistidine intermediate. S14 carries the phosphoserine modification. E89 (proton donor/acceptor) is an active-site residue. S118 bears the Phosphoserine mark. Residue T121 is modified to Phosphothreonine. 2 positions are modified to phosphotyrosine: Y132 and Y133. S135 carries the post-translational modification Phosphoserine. T152 carries the phosphothreonine modification. 187-188 (GN) contacts substrate.

It belongs to the phosphoglycerate mutase family. BPG-dependent PGAM subfamily. Homodimer. Interacts with ENO1. Expressed in the testes (at protein level).

It carries out the reaction (2R)-2-phosphoglycerate = (2R)-3-phosphoglycerate. The catalysed reaction is (2R)-3-phospho-glyceroyl phosphate = (2R)-2,3-bisphosphoglycerate + H(+). Its function is as follows. Interconversion of 3- and 2-phosphoglycerate with 2,3-bisphosphoglycerate as the primer of the reaction. Can also catalyze the reaction of EC 5.4.2.4 (synthase), but with a reduced activity. This Mus musculus (Mouse) protein is Phosphoglycerate mutase 2 (Pgam2).